The chain runs to 113 residues: Large ribosomal subunit protein uL24 (113 aa).

This sequence belongs to the universal ribosomal protein uL24 family. As to quaternary structure, part of the 50S ribosomal subunit.

In terms of biological role, one of two assembly initiator proteins, it binds directly to the 5'-end of the 23S rRNA, where it nucleates assembly of the 50S subunit. Its function is as follows. One of the proteins that surrounds the polypeptide exit tunnel on the outside of the subunit. The polypeptide is Large ribosomal subunit protein uL24 (Synechococcus sp. (strain RCC307)).